A 411-amino-acid chain; its full sequence is Thyroid hormone receptor beta (411 aa).

Residues 1–24 (MTPNSMTENGLPAWDKPKPCPDGE) are disordered. The tract at residues 1 to 104 (MTPNSMTENG…IPSYLDKDEL (104 aa)) is modulating. A compositionally biased stretch (basic and acidic residues) spans 15–24 (DKPKPCPDGE). 8 residues coordinate Zn(2+): Cys-105, Cys-108, Cys-122, Cys-125, Cys-143, Cys-149, Cys-159, and Cys-162. 2 consecutive NR C4-type zinc fingers follow at residues 105 to 125 (CVVCGDKATGYHYRCITCEGC) and 143 to 167 (CKYEGKCVIDKVTRNQCQECRFKKC). The segment at residues 105–179 (CVVCGDKATG…VGMATDLVLD (75 aa)) is a DNA-binding region (nuclear receptor). The region spanning 215-411 (QEWELIKTVT…EHYINYRRNS (197 aa)) is the NR LBD domain. The tract at residues 242–411 (KFLPEDIGQA…EHYINYRRNS (170 aa)) is interaction with NR2F6. 2 residues coordinate 3,3',5-triiodo-L-thyronine: Arg-280 and Asn-329. The L-thyroxine site is built by Arg-280 and Asn-329.

It belongs to the nuclear hormone receptor family. NR1 subfamily. In terms of assembly, binds DNA as a dimer; homodimer and heterodimer with RXRA. Interacts with the coactivators NCOA1/SRC1, NCOA2/GRIP1, NCOA7 and MED1/TRAP220 in a ligand-inducible manner. Interacts with the corepressor NCOR1 in absence of ligand. Interacts with C1D. Interacts with NR2F6; the interaction impairs the binding of the THRB homodimer and THRB:RXRB heterodimer to T3 response elements. Interacts with PRMT2 and THRSP. Interacts with TACC1; this interaction is decreased in the presence of thyroid hormone T3.

It is found in the nucleus. Nuclear hormone receptor that can act as a repressor or activator of transcription. High affinity receptor for thyroid hormones, including triiodothyronine and thyroxine. This is Thyroid hormone receptor beta (THRB) from Ovis aries (Sheep).